The chain runs to 117 residues: NADH-ubiquinone oxidoreductase chain 3 (117 aa).

The next 3 membrane-spanning stretches (helical) occupy residues 6–26 (ILILLIISGTLSILILGASYI), 58–78 (FFLIGILFLIFDLEISFLFPW), and 85–105 (LPLFGYWVVMLFLFILTLGLI).

Belongs to the complex I subunit 3 family.

It localises to the mitochondrion membrane. It carries out the reaction a ubiquinone + NADH + 5 H(+)(in) = a ubiquinol + NAD(+) + 4 H(+)(out). Its function is as follows. Core subunit of the mitochondrial membrane respiratory chain NADH dehydrogenase (Complex I) that is believed to belong to the minimal assembly required for catalysis. Complex I functions in the transfer of electrons from NADH to the respiratory chain. The immediate electron acceptor for the enzyme is believed to be ubiquinone. The sequence is that of NADH-ubiquinone oxidoreductase chain 3 (ND3) from Sarcophyton glaucum (Toadstool umbrella leather coral).